Consider the following 113-residue polypeptide: Nucleoid-associated protein THA_1374 (113 aa).

The protein belongs to the YbaB/EbfC family. Homodimer.

Its subcellular location is the cytoplasm. It is found in the nucleoid. Binds to DNA and alters its conformation. May be involved in regulation of gene expression, nucleoid organization and DNA protection. In Thermosipho africanus (strain TCF52B), this protein is Nucleoid-associated protein THA_1374.